Reading from the N-terminus, the 501-residue chain is Acetylcholine receptor subunit beta (501 aa).

The N-terminal stretch at 1–23 (MALGALLLLLGVLGTPLAPGARG) is a signal peptide. At 24–244 (SEAEGQLIKK…VIFYLIIRRK (221 aa)) the chain is on the extracellular side. The cysteines at positions 151 and 165 are disulfide-linked. N-linked (GlcNAc...) asparagine glycosylation occurs at Asn164. Transmembrane regions (helical) follow at residues 245-269 (PLFY…VFYL), 277-295 (MGLS…LLLA), and 311-332 (YLMF…VLNL). Topologically, residues 333 to 469 (HHRSPHTHQM…WQFVAMVVDR (137 aa)) are cytoplasmic. Residues 362 to 382 (RPKPERDQLPEPHHSLSPRSG) form a disordered region. The span at 363–375 (PKPERDQLPEPHH) shows a compositional bias: basic and acidic residues. Tyr390 is subject to Phosphotyrosine; by Tyr-kinases. The chain crosses the membrane as a helical span at residues 470–488 (LFLWTFIVFTSVGTLVIFL).

The protein belongs to the ligand-gated ion channel (TC 1.A.9) family. Acetylcholine receptor (TC 1.A.9.1) subfamily. Beta-1/CHRNB1 sub-subfamily. Pentamer of two alpha chains, and one each of the beta, delta, and gamma (in immature muscle) or epsilon (in mature muscle) chains. The muscle heteropentamer composed of alpha-1, beta-1, delta, epsilon subunits interacts with the alpha-conotoxin ImII.

It is found in the postsynaptic cell membrane. Its subcellular location is the cell membrane. The enzyme catalyses K(+)(in) = K(+)(out). It carries out the reaction Na(+)(in) = Na(+)(out). Its function is as follows. After binding acetylcholine, the AChR responds by an extensive change in conformation that affects all subunits and leads to opening of an ion-conducting channel across the plasma membrane. The protein is Acetylcholine receptor subunit beta (Chrnb1) of Mus musculus (Mouse).